The chain runs to 496 residues: Glycylpeptide N-tetradecanoyltransferase 1 (496 aa).

Positions 1-82 (MADESETAVK…SAQDQPVKMN (82 aa)) are disordered. Phosphoserine occurs at positions 31 and 47. The span at 55 to 66 (KKKKKKQKKKKE) shows a compositional bias: basic residues. Phosphoserine is present on Ser83. Residues Gln118, Phe119, Trp120, Phe247, Leu248, Cys249, Val250, Ser256, Arg258, Val259, and Ala260 each coordinate tetradecanoyl-CoA.

This sequence belongs to the NMT family. Heart, gut, kidney, liver and placenta.

The protein resides in the cytoplasm. It is found in the cytosol. The protein localises to the membrane. The catalysed reaction is N-terminal glycyl-[protein] + tetradecanoyl-CoA = N-tetradecanoylglycyl-[protein] + CoA + H(+). It carries out the reaction N-terminal glycyl-L-lysyl-[protein] + tetradecanoyl-CoA = N-terminal glycyl-(N(6)-tetradecanoyl)-L-lysyl-[protein] + CoA + H(+). In terms of biological role, adds a myristoyl group to the N-terminal glycine residue of certain cellular and viral proteins. Also able to mediate N-terminal lysine myristoylation of proteins: catalyzes myristoylation of ARF6 on both 'Gly-2' and 'Lys-3'. Lysine myristoylation is required to maintain ARF6 on membranes during the GTPase cycle. The chain is Glycylpeptide N-tetradecanoyltransferase 1 from Homo sapiens (Human).